The chain runs to 254 residues: Triosephosphate isomerase (254 aa).

12-14 (NWK) is a binding site for substrate. His99 acts as the Electrophile in catalysis. The active-site Proton acceptor is the Glu169. Substrate is bound by residues Gly175, Ser214, and 235-236 (GG).

It belongs to the triosephosphate isomerase family. As to quaternary structure, homodimer.

It is found in the cytoplasm. The enzyme catalyses D-glyceraldehyde 3-phosphate = dihydroxyacetone phosphate. The protein operates within carbohydrate biosynthesis; gluconeogenesis. It participates in carbohydrate degradation; glycolysis; D-glyceraldehyde 3-phosphate from glycerone phosphate: step 1/1. Involved in the gluconeogenesis. Catalyzes stereospecifically the conversion of dihydroxyacetone phosphate (DHAP) to D-glyceraldehyde-3-phosphate (G3P). The sequence is that of Triosephosphate isomerase from Bartonella tribocorum (strain CIP 105476 / IBS 506).